The chain runs to 227 residues: Phosphoribosylformylglycinamidine synthase subunit PurQ (227 aa).

In terms of domain architecture, Glutamine amidotransferase type-1 spans 2–226 (KFAVIQFPGS…VQAWKEEQVN (225 aa)). The Nucleophile role is filled by Cys-86. Residues His-195 and Glu-197 contribute to the active site.

In terms of assembly, part of the FGAM synthase complex composed of 1 PurL, 1 PurQ and 2 PurS subunits.

It localises to the cytoplasm. The enzyme catalyses N(2)-formyl-N(1)-(5-phospho-beta-D-ribosyl)glycinamide + L-glutamine + ATP + H2O = 2-formamido-N(1)-(5-O-phospho-beta-D-ribosyl)acetamidine + L-glutamate + ADP + phosphate + H(+). The catalysed reaction is L-glutamine + H2O = L-glutamate + NH4(+). Its pathway is purine metabolism; IMP biosynthesis via de novo pathway; 5-amino-1-(5-phospho-D-ribosyl)imidazole from N(2)-formyl-N(1)-(5-phospho-D-ribosyl)glycinamide: step 1/2. In terms of biological role, part of the phosphoribosylformylglycinamidine synthase complex involved in the purines biosynthetic pathway. Catalyzes the ATP-dependent conversion of formylglycinamide ribonucleotide (FGAR) and glutamine to yield formylglycinamidine ribonucleotide (FGAM) and glutamate. The FGAM synthase complex is composed of three subunits. PurQ produces an ammonia molecule by converting glutamine to glutamate. PurL transfers the ammonia molecule to FGAR to form FGAM in an ATP-dependent manner. PurS interacts with PurQ and PurL and is thought to assist in the transfer of the ammonia molecule from PurQ to PurL. The protein is Phosphoribosylformylglycinamidine synthase subunit PurQ of Listeria welshimeri serovar 6b (strain ATCC 35897 / DSM 20650 / CCUG 15529 / CIP 8149 / NCTC 11857 / SLCC 5334 / V8).